Consider the following 168-residue polypeptide: Cyclin-dependent kinase 4 inhibitor C (168 aa).

5 ANK repeats span residues 4-33, 37-65, 69-98, 102-132, and 136-165; these read PWGNELASAAARGDLEQLTSLLQNNVNVNA, FGRTALQVMKLGNPEIARRLLLRGANPNL, TGFAVIHDAARAGFLDTVQALLEFQADVNI, EGNLPLHLAAKEGHLPVVEFLMKHTACNVGH, and KGDTAFDLARFYGRNEVISLMEANGVGGAT.

Belongs to the CDKN2 cyclin-dependent kinase inhibitor family. In terms of assembly, heterodimer of p18 with CDK6.

Its function is as follows. Interacts strongly with CDK6, weakly with CDK4. Inhibits cell growth and proliferation with a correlated dependence on endogenous retinoblastoma protein RB. The chain is Cyclin-dependent kinase 4 inhibitor C (Cdkn2c) from Mus musculus (Mouse).